A 655-amino-acid polypeptide reads, in one-letter code: Katanin p80 WD40 repeat-containing subunit B1 (655 aa).

6 WD repeats span residues 18–58 (AHGS…CIMS), 61–100 (GHTT…ILRT), 103–142 (GHKA…CVFR), 145–184 (GHTQ…MMAE), 187–226 (EHKG…LIGC), and 229–269 (GETI…DTVP). Residues 316-453 (VPAEMPISQP…PVPAPQSKPP (138 aa)) are disordered. Positions 358–374 (KESRAEIQNPEDYKEIF) are enriched in basic and acidic residues. Polar residues predominate over residues 415–426 (PATSNKNNTEQL).

It belongs to the WD repeat KATNB1 family. In terms of assembly, interacts with katna1. This interaction enhances the microtubule binding and severing activity of katna1 and also targets this activity to the centrosome.

The protein resides in the cytoplasm. The protein localises to the cytoskeleton. It localises to the microtubule organizing center. Its subcellular location is the centrosome. It is found in the spindle pole. The protein resides in the spindle. Participates in a complex which severs microtubules in an ATP-dependent manner. May act to target the enzymatic subunit of this complex to sites of action such as the centrosome. Microtubule severing may promote rapid reorganization of cellular microtubule arrays and the release of microtubules from the centrosome following nucleation. This Xenopus tropicalis (Western clawed frog) protein is Katanin p80 WD40 repeat-containing subunit B1 (katnb1).